A 279-amino-acid polypeptide reads, in one-letter code: DegV domain-containing protein SA1258 (279 aa).

One can recognise a DegV domain in the interval 4–278 (QIIVTDSTSD…QGAIGLVVLK (275 aa)). Hexadecanoate-binding residues include threonine 61 and serine 93.

Its function is as follows. May bind long-chain fatty acids, such as palmitate, and may play a role in lipid transport or fatty acid metabolism. In Staphylococcus aureus (strain N315), this protein is DegV domain-containing protein SA1258.